Consider the following 525-residue polypeptide: tRNA-splicing endonuclease subunit Sen54 (525 aa).

Methionine 1 is subject to N-acetylmethionine. Residues 1–46 (MEPEPEPGSVEVPAGRVLSASELRAARSRSQKLPQRSHGPKDFLPD) are disordered. Residues 7–23 (PGSVEVPAGRVLSASEL) are compositionally biased toward low complexity. Phosphoserine is present on serine 178. The residue at position 180 (tyrosine 180) is a Phosphotyrosine. Residues 220-232 (LPPVSLAASSSPA) are compositionally biased toward low complexity. A disordered region spans residues 220–273 (LPPVSLAASSSPACDQSSQYPEEKSQDSSPRQGSELPLQFLGSSEPCSDLARED).

It belongs to the SEN54 family. TRNA splicing endonuclease is a heterotetramer composed of TSEN2, TSEN15, TSEN34/LENG5 and TSEN54. tRNA splicing endonuclease complex also contains proteins of the pre-mRNA 3'-end processing machinery such as CLP1, CPSF1, CPSF4 and CSTF2.

Its subcellular location is the nucleus. The protein localises to the nucleolus. Functionally, non-catalytic subunit of the tRNA-splicing endonuclease complex, a complex responsible for identification and cleavage of the splice sites in pre-tRNA. It cleaves pre-tRNA at the 5' and 3' splice sites to release the intron. The products are an intron and two tRNA half-molecules bearing 2',3' cyclic phosphate and 5'-OH termini. There are no conserved sequences at the splice sites, but the intron is invariably located at the same site in the gene, placing the splice sites an invariant distance from the constant structural features of the tRNA body. The tRNA splicing endonuclease is also involved in mRNA processing via its association with pre-mRNA 3'-end processing factors, establishing a link between pre-tRNA splicing and pre-mRNA 3'-end formation, suggesting that the endonuclease subunits function in multiple RNA-processing events. In Mus musculus (Mouse), this protein is tRNA-splicing endonuclease subunit Sen54 (Tsen54).